Consider the following 309-residue polypeptide: tRNA uridine(34) hydroxylase (309 aa).

In terms of domain architecture, Rhodanese spans 126-220 (SDPEVIVIDT…YLEQIPPEES (95 aa)). Cysteine 180 serves as the catalytic Cysteine persulfide intermediate.

This sequence belongs to the TrhO family.

It catalyses the reaction uridine(34) in tRNA + AH2 + O2 = 5-hydroxyuridine(34) in tRNA + A + H2O. In terms of biological role, catalyzes oxygen-dependent 5-hydroxyuridine (ho5U) modification at position 34 in tRNAs. In Nostoc sp. (strain PCC 7120 / SAG 25.82 / UTEX 2576), this protein is tRNA uridine(34) hydroxylase.